We begin with the raw amino-acid sequence, 388 residues long: Succinate--CoA ligase [ADP-forming] subunit beta (388 aa).

Residues K9–E244 enclose the ATP-grasp domain. ATP contacts are provided by residues K46, G53–G55, E99, A102, and E107. The Mg(2+) site is built by N199 and D213. Substrate is bound by residues N264 and G321–M323.

It belongs to the succinate/malate CoA ligase beta subunit family. In terms of assembly, heterotetramer of two alpha and two beta subunits. Mg(2+) serves as cofactor.

The enzyme catalyses succinate + ATP + CoA = succinyl-CoA + ADP + phosphate. It carries out the reaction GTP + succinate + CoA = succinyl-CoA + GDP + phosphate. Its pathway is carbohydrate metabolism; tricarboxylic acid cycle; succinate from succinyl-CoA (ligase route): step 1/1. Functionally, succinyl-CoA synthetase functions in the citric acid cycle (TCA), coupling the hydrolysis of succinyl-CoA to the synthesis of either ATP or GTP and thus represents the only step of substrate-level phosphorylation in the TCA. The beta subunit provides nucleotide specificity of the enzyme and binds the substrate succinate, while the binding sites for coenzyme A and phosphate are found in the alpha subunit. The sequence is that of Succinate--CoA ligase [ADP-forming] subunit beta from Cupriavidus taiwanensis (strain DSM 17343 / BCRC 17206 / CCUG 44338 / CIP 107171 / LMG 19424 / R1) (Ralstonia taiwanensis (strain LMG 19424)).